The primary structure comprises 1311 residues: MSLLQSALDFLAGPGSLGGASGRDQSDFVGQTVELGELRLRVRRVLAEGGFAFVYEAQDVGSGREYALKRLLSNEEEKNRAIIQEVCFMKKLSGHPNIVQFCSAASIGKEESDTGQAEFLLLTELCKGQLVEFLKKMESRGPLSCDTVLKIFYQTCRAVQHMHRQKPPIIHRDLKVENLLLSNQGTIKLCDFGSATTISHYPDYSWSAQRRALVEEEITRNTTPMYRTPEIIDLYSNFPIGEKQDIWALGCILYLLCFRQHPFEDGAKLRIVNGKYSIPPHDTQYTVFHSLIRAMLQVNPEERLSIAEVVHQLQEIAAARNVNPKSPITELLEQNGGYGSATLSRGPPPPVGPAGSGYSGGLALAEYDQPYGGFLDILRGGTERLFTNLKDTSSKVIQSVANYAKGDLDISYITSRIAVMSFPAEGVESALKNNIEDVRLFLDSKHPGHYAVYNLSPRTYRPSRFHNRVSECGWAARRAPHLHTLYNICRNMHAWLRQDHKNVCVVHCMDGRAASAVAVCSFLCFCRLFSTAEAAVYMFSMKRCPPGIWPSHKRYIEYMCDMVAEEPITPHSKPILVRAVVMTPVPLFSKQRSGCRPFCEVYVGDERVASTSQEYDKMRDFKIEDGKAVIPLGVTVQGDVLIVIYHARSTLGGRLQAKMASMKMFQIQFHTGFVPRNATTVKFAKYDLDACDIQEKYPDLFQVNLEVEVEPRDRPSREAPPWENSSMRGLNPKILFSSREEQQDILSKFGKPELPRQPGSTAQYDAGAGSPEAEPTDSDSPPSSSADASRFLHTLDWQEEKEAETGAENASSKESESALMEDRDESEVSDEGGSPISSEGQEPRADPEPPGLAAGLVQQDLVFEVETPAVLPEPVPQEDGVDLLGLHSEVGAGPAVPPQACKAPSSNTDLLSCLLGPPEAASQGPPEDLLSEDPLLLASPAPPLSVQSTPRGGPPAAADPFGPLLPSSGNNSQPCSNPDLFGEFLNSDSVTVPPSFPSAHSAPPPSCSADFLHLGDLPGEPSKMTASSSNPDLLGGWAAWTETAASAVAPTPATEGPLFSPGGQPAPCGSQASWTKSQNPDPFADLGDLSSGLQGSPAGFPPGGFIPKTATTPKGSSSWQTSRPPAQGASWPPQAKPPPKACTQPRPNYASNFSVIGAREERGVRAPSFAQKPKVSENDFEDLLSNQGFSSRSDKKGPKTIAEMRKQDLAKDTDPLKLKLLDWIEGKERNIRALLSTLHTVLWDGESRWTPVGMADLVAPEQVKKHYRRAVLAVHPDKAAGQPYEQHAKMIFMELNDAWSEFENQGSRPLF.

Residue serine 2 is modified to N-acetylserine. Phosphoserine occurs at positions 2 and 16. Residues 40–314 (LRVRRVLAEG…SIAEVVHQLQ (275 aa)) enclose the Protein kinase domain. Aspartate 173 functions as the Proton acceptor in the catalytic mechanism. In terms of domain architecture, Phosphatase tensin-type spans 399–566 (SVANYAKGDL…EYMCDMVAEE (168 aa)). Position 456 is a phosphoserine (serine 456). Positions 572 to 710 (SKPILVRAVV…FQVNLEVEVE (139 aa)) constitute a C2 tensin-type domain. Disordered stretches follow at residues 709–729 (VEPRDRPSREAPPWENSSMRG) and 749–788 (FGKPELPRQPGSTAQYDAGAGSPEAEPTDSDSPPSSSADA). Position 770 is a phosphoserine (serine 770). A compositionally biased stretch (low complexity) spans 770-788 (SPEAEPTDSDSPPSSSADA). Residue threonine 776 is modified to Phosphothreonine. Position 783 is a phosphoserine (serine 783). Threonine 794 is subject to Phosphothreonine. Disordered regions lie at residues 801–860 (KEAE…VQQD), 913–1035 (CLLG…DLLG), and 1047–1150 (AVAP…PNYA). Serine 811, serine 826, serine 829, serine 834, and serine 939 each carry phosphoserine. Low complexity-rich tracts occupy residues 925-939 (PPEDLLSEDPLLLAS) and 950-966 (PRGGPPAAADPFGPLLP). Composition is skewed to polar residues over residues 967–976 (SSGNNSQPCS) and 1070–1080 (SQASWTKSQNP). Phosphoserine is present on serine 1096. Polar residues predominate over residues 1109 to 1124 (TATTPKGSSSWQTSRP). The residue at position 1123 (arginine 1123) is an Omega-N-methylarginine. Residues serine 1176 and serine 1185 each carry the phosphoserine modification. In terms of domain architecture, J spans 1247 to 1311 (SRWTPVGMAD…FENQGSRPLF (65 aa)).

Belongs to the protein kinase superfamily. Ser/Thr protein kinase family. In terms of tissue distribution, ubiquitous. Highest in testis.

It is found in the cytoplasm. Its subcellular location is the perinuclear region. The protein localises to the golgi apparatus. It localises to the trans-Golgi network. The protein resides in the cell junction. It is found in the focal adhesion. Its subcellular location is the cytoplasmic vesicle. The protein localises to the clathrin-coated vesicle. It catalyses the reaction L-seryl-[protein] + ATP = O-phospho-L-seryl-[protein] + ADP + H(+). The enzyme catalyses L-threonyl-[protein] + ATP = O-phospho-L-threonyl-[protein] + ADP + H(+). Its function is as follows. Associates with cyclin G and CDK5. Seems to act as an auxilin homolog that is involved in the uncoating of clathrin-coated vesicles by Hsc70 in non-neuronal cells. Expression oscillates slightly during the cell cycle, peaking at G1. May play a role in clathrin-mediated endocytosis and intracellular trafficking, and in the dynamics of clathrin assembly/disassembly. The polypeptide is Cyclin-G-associated kinase (Homo sapiens (Human)).